The sequence spans 826 residues: Periplasmic nitrate reductase (826 aa).

Residues 1 to 32 constitute a signal peptide (tat-type signal); the sequence is MSISRREFLKANAAVAAATAVGATLPVKIVEA. The 57-residue stretch at 39 to 95 folds into the 4Fe-4S Mo/W bis-MGD-type domain; sequence IKWDKAPCRFCGVGCSVLVGTDNGKVVATKGDPESPVNKGLNCIKGYFLSKIMYGKD. Residues Cys46, Cys49, Cys53, and Cys81 each contribute to the [4Fe-4S] cluster site. Residues Lys83, Gln150, Asn175, Cys179, 212 to 219, 262 to 264, Met372, Gln376, Asn482, 508 to 509, Lys531, Asp558, and 716 to 725 each bind Mo-bis(molybdopterin guanine dinucleotide); these read WGANMAEM, QSD, SD, and TGRVLEHWHT. Position 792 (Phe792) interacts with substrate. 2 residues coordinate Mo-bis(molybdopterin guanine dinucleotide): Asn800 and Lys817.

This sequence belongs to the prokaryotic molybdopterin-containing oxidoreductase family. NasA/NapA/NarB subfamily. As to quaternary structure, component of the periplasmic nitrate reductase NapAB complex composed of NapA and NapB. [4Fe-4S] cluster is required as a cofactor. The cofactor is Mo-bis(molybdopterin guanine dinucleotide). Predicted to be exported by the Tat system. The position of the signal peptide cleavage has not been experimentally proven.

The protein resides in the periplasm. It carries out the reaction 2 Fe(II)-[cytochrome] + nitrate + 2 H(+) = 2 Fe(III)-[cytochrome] + nitrite + H2O. Catalytic subunit of the periplasmic nitrate reductase complex NapAB. Receives electrons from NapB and catalyzes the reduction of nitrate to nitrite. This Shewanella halifaxensis (strain HAW-EB4) protein is Periplasmic nitrate reductase.